Here is a 257-residue protein sequence, read N- to C-terminus: NAD-capped RNA hydrolase NudC (257 aa).

Arg69 is a binding site for substrate. Residues Cys98 and Cys101 each coordinate Zn(2+). Residue Glu111 coordinates substrate. The Zn(2+) site is built by Cys116 and Cys119. Residue Tyr124 coordinates substrate. The region spanning 125 to 248 (PQIAPCIIVA…TVARRLIEDT (124 aa)) is the Nudix hydrolase domain. The a divalent metal cation site is built by Ala158, Glu174, and Glu178. Positions 159–180 (GFVEVGETLEQAAAREIFEESR) match the Nudix box motif. Residue 192 to 199 (QPWPFPHS) participates in substrate binding. Glu219 is a binding site for a divalent metal cation. Ala241 contributes to the substrate binding site.

This sequence belongs to the Nudix hydrolase family. NudC subfamily. Homodimer. Mg(2+) is required as a cofactor. It depends on Mn(2+) as a cofactor. Zn(2+) serves as cofactor.

It catalyses the reaction a 5'-end NAD(+)-phospho-ribonucleoside in mRNA + H2O = a 5'-end phospho-adenosine-phospho-ribonucleoside in mRNA + beta-nicotinamide D-ribonucleotide + 2 H(+). The catalysed reaction is NAD(+) + H2O = beta-nicotinamide D-ribonucleotide + AMP + 2 H(+). The enzyme catalyses NADH + H2O = reduced beta-nicotinamide D-ribonucleotide + AMP + 2 H(+). In terms of biological role, mRNA decapping enzyme that specifically removes the nicotinamide adenine dinucleotide (NAD) cap from a subset of mRNAs by hydrolyzing the diphosphate linkage to produce nicotinamide mononucleotide (NMN) and 5' monophosphate mRNA. The NAD-cap is present at the 5'-end of some mRNAs and stabilizes RNA against 5'-processing. Has preference for mRNAs with a 5'-end purine. Catalyzes the hydrolysis of a broad range of dinucleotide pyrophosphates. The polypeptide is NAD-capped RNA hydrolase NudC (Edwardsiella ictaluri (strain 93-146)).